The following is a 178-amino-acid chain: Alkyl hydroperoxide reductase AhpD (178 aa).

The active-site Proton donor is the C130. A disulfide bridge connects residues C130 and C133. C133 functions as the Cysteine sulfenic acid (-SOH) intermediate in the catalytic mechanism.

Belongs to the AhpD family. In terms of assembly, homotrimer.

The enzyme catalyses N(6)-[(R)-dihydrolipoyl]-L-lysyl-[lipoyl-carrier protein] + a hydroperoxide = N(6)-[(R)-lipoyl]-L-lysyl-[lipoyl-carrier protein] + an alcohol + H2O. In terms of biological role, antioxidant protein with alkyl hydroperoxidase activity. Required for the reduction of the AhpC active site cysteine residues and for the regeneration of the AhpC enzyme activity. The polypeptide is Alkyl hydroperoxide reductase AhpD (Mycolicibacterium paratuberculosis (strain ATCC BAA-968 / K-10) (Mycobacterium paratuberculosis)).